The sequence spans 206 residues: dCTP deaminase, dUMP-forming (206 aa).

Residues 117–122 (RSSFGR), Asp-135, 143–145 (TLE), Gln-163, Tyr-177, Lys-184, and Gln-188 each bind dCTP. Residue Glu-145 is the Proton donor/acceptor of the active site.

It belongs to the dCTP deaminase family. In terms of assembly, homotrimer.

It catalyses the reaction dCTP + 2 H2O = dUMP + NH4(+) + diphosphate. It functions in the pathway pyrimidine metabolism; dUMP biosynthesis; dUMP from dCTP: step 1/1. Functionally, bifunctional enzyme that catalyzes both the deamination of dCTP to dUTP and the hydrolysis of dUTP to dUMP without releasing the toxic dUTP intermediate. The protein is dCTP deaminase, dUMP-forming of Methanococcus maripaludis (strain C5 / ATCC BAA-1333).